The chain runs to 569 residues: GATOR1 complex protein NPRL3 (569 aa).

Disordered regions lie at residues 27-60 (PFQRSQEHPASQTNKPRSRYAVNNTGEHADDQDG) and 441-476 (TPNALSFGSPTSSDDMTLTSPSMDNSSAELLPSGDS). 2 stretches are compositionally biased toward polar residues: residues 34–52 (HPASQTNKPRSRYAVNNTG) and 441–468 (TPNALSFGSPTSSDDMTLTSPSMDNSSA). Phosphoserine is present on S476.

It belongs to the NPR3 family. As to quaternary structure, within the GATOR complex, component of the GATOR1 subcomplex, made of DEPDC5, NPRL2 and NPRL3. GATOR1 mediates the strong interaction of the GATOR complex with small GTPases Rag (RagA/RRAGA, RagB/RRAGB, RagC/RRAGC and/or RagD/RRAGD) heterodimers. GATOR1 interacts with GPR155/LYCHOS; interaction takes place in presence of cholesterol and prevents interaction between GATOR1 and KICSTOR.

Its subcellular location is the lysosome membrane. Functionally, as a component of the GATOR1 complex functions as an inhibitor of the amino acid-sensing branch of the mTORC1 pathway. In response to amino acid depletion, the GATOR1 complex has GTPase activating protein (GAP) activity and strongly increases GTP hydrolysis by RagA/RRAGA (or RagB/RRAGB) within heterodimeric Rag complexes, thereby turning them into their inactive GDP-bound form, releasing mTORC1 from lysosomal surface and inhibiting mTORC1 signaling. In the presence of abundant amino acids, the GATOR1 complex is negatively regulated by GATOR2, the other GATOR subcomplex, in this amino acid-sensing branch of the TORC1 pathway. The polypeptide is GATOR1 complex protein NPRL3 (Mus musculus (Mouse)).